A 297-amino-acid chain; its full sequence is Transmembrane protein 178A (297 aa).

A signal peptide spans 1–25 (MEPRALVTALSLGLSLCSLGLLVTA). Over 26-179 (IFTDHWYETD…LLHLRRITAG (154 aa)) the chain is Extracellular. The span at 41-57 (ESCERSRAGADPPDQKN) shows a compositional bias: basic and acidic residues. Residues 41–84 (ESCERSRAGADPPDQKNRLMPLSHLPLRDSPPLGRRLLPGGPGR) form a disordered region. Residues 68-79 (RDSPPLGRRLLP) show a composition bias toward low complexity. Asn-158 is a glycosylation site (N-linked (GlcNAc...) asparagine). A helical membrane pass occupies residues 180–200 (FLGMAVAVLLCGCIVATVSFF). The Cytoplasmic segment spans residues 201–208 (WEESLTQH). The helical transmembrane segment at 209 to 229 (VAGLLFLMTGIFCTISLCTYA) threads the bilayer. At 230-257 (ASISYDLNRLPKLIYSLPADVEHGYSWS) the chain is on the extracellular side. A helical membrane pass occupies residues 258-278 (IFCAWCSLGFIVAAGGLCIAY). Residues 279–297 (PFISRTKIAQLKSGRDSTV) lie on the Cytoplasmic side of the membrane.

Belongs to the TMEM178 family. As to quaternary structure, interacts with STIM1.

The protein localises to the endoplasmic reticulum membrane. Its function is as follows. Acts as a negative regulator of osteoclast differentiation in basal and inflammatory conditions by regulating TNFSF11-induced Ca (2+) fluxes, thereby controlling the induction of NFATC1. This is Transmembrane protein 178A (TMEM178A) from Homo sapiens (Human).